Reading from the N-terminus, the 522-residue chain is Semenogelin-2 (522 aa).

Positions 1–23 are cleaved as a signal peptide; the sequence is MKSIILFVLSLLLILEKQAAVMG. 4 disordered regions span residues 26-62, 132-158, 272-358, and 379-522; these read CGSKGQLPSGSSQFPRGQKGQHYSGQKDEQHTKSKGS, GGQAHRGTQNPSQDQGNSPSGKGISSQ, NLNQ…ERHL, and EEQI…PVST. Composition is skewed to polar residues over residues 31 to 40 and 137 to 158; these read QLPSGSSQFP and RGTQNPSQDQGNSPSGKGISSQ. A compositionally biased stretch (basic and acidic residues) spans 292–310; it reads RTEERQLNRGEKSVQKDVS. The span at 325–335 shows a compositional bias: polar residues; sequence KSQNQVTIHSQ. Positions 336-345 are enriched in basic and acidic residues; the sequence is GQEHGHKENK. 3 stretches are compositionally biased toward polar residues: residues 379–397, 427–436, and 446–464; these read EEQIHGKSQNQVRIPSQAQ, KDVSQSSTSF, and SQIQTPNPNQDQWSVQNAK. 2 stretches are compositionally biased toward basic and acidic residues: residues 465–492 and 499–522; these read GKSDQSAGREQDLLSHEQKGRHQQESSE and TEHEVAYDDHLTQQYNEDRNPVST.

This sequence belongs to the semenogelin family. In terms of assembly, interacts with SERPINA5.

The protein localises to the secreted. In terms of biological role, participates in the formation of a gel matrix (sperm coagulum) entrapping the accessory gland secretions and ejaculated spermatozoa. This Hylobates klossii (Kloss's gibbon) protein is Semenogelin-2 (SEMG2).